The sequence spans 492 residues: Probable cobyric acid synthase (492 aa).

Residues 252–444 form the GATase cobBQ-type domain; it reads PIEVNVVKFS…FHGILENFEF (193 aa). The active-site Nucleophile is the C330. H436 is an active-site residue.

The protein belongs to the CobB/CobQ family. CobQ subfamily.

It functions in the pathway cofactor biosynthesis; adenosylcobalamin biosynthesis. Functionally, catalyzes amidations at positions B, D, E, and G on adenosylcobyrinic A,C-diamide. NH(2) groups are provided by glutamine, and one molecule of ATP is hydrogenolyzed for each amidation. This Methanococcus maripaludis (strain DSM 14266 / JCM 13030 / NBRC 101832 / S2 / LL) protein is Probable cobyric acid synthase.